The chain runs to 1324 residues: Synaptojanin-1 (1324 aa).

Residues valine 119–glycine 442 form the SAC domain. Residues alanine 475–histidine 859 are catalytic. A phosphoserine mark is found at serine 820 and serine 830. In terms of domain architecture, RRM spans serine 902–proline 971. The segment at leucine 1030 to asparagine 1324 is disordered. Positions alanine 1080–leucine 1103 are enriched in polar residues. Over residues proline 1108–serine 1130 the composition is skewed to pro residues. Residues alanine 1138 to asparagine 1156 are compositionally biased toward basic and acidic residues. An Omega-N-methylarginine modification is found at arginine 1186. The residue at position 1205 (threonine 1205) is a Phosphothreonine. Serine 1277 is subject to Phosphoserine. The span at serine 1278–alanine 1292 shows a compositional bias: low complexity.

The protein belongs to the synaptojanin family. It in the central section; belongs to the inositol 1,4,5-trisphosphate 5-phosphatase family. As to quaternary structure, interacts with ASH/GRB2. Interacts with PACSIN1, PACSIN2 and PACSIN3. Interacts with AMPH, SH3GL1, SH3GL2 and SH3GL3. Interacts with MYO1E (via SH3 domain). Interacts with BIN1 and DNM1. Interacts with EPS15. In terms of tissue distribution, ubiquitously expressed with highest levels in brain.

Its subcellular location is the cytoplasm. It localises to the perinuclear region. The catalysed reaction is a 1,2-diacyl-sn-glycero-3-phospho-(1D-myo-inositol-4,5-bisphosphate) + H2O = a 1,2-diacyl-sn-glycero-3-phospho-(1D-myo-inositol 4-phosphate) + phosphate. Phosphatase that acts on various phosphoinositides, including phosphatidylinositol 4-phosphate, phosphatidylinositol (4,5)-bisphosphate and phosphatidylinositol (3,4,5)-trisphosphate. Has a role in clathrin-mediated endocytosis. Hydrolyzes PIP2 bound to actin regulatory proteins resulting in the rearrangement of actin filaments downstream of tyrosine kinase and ASH/GRB2. The sequence is that of Synaptojanin-1 (SYNJ1) from Bos taurus (Bovine).